Here is a 163-residue protein sequence, read N- to C-terminus: Allophycocyanin alpha-B chain (163 aa).

An N4-methylasparagine modification is found at Asn71. Position 81 (Cys81) interacts with (2R,3E)-phycocyanobilin.

Belongs to the phycobiliprotein family. As to quaternary structure, heterodimer of an alpha and a beta chain. Contains one covalently linked bilin chromophore.

It localises to the cellular thylakoid membrane. Functionally, light-harvesting photosynthetic bile pigment-protein from the phycobiliprotein complex. Allophycocyanin has a maximum absorption at approximately 650 nanometers. This chain is Allophycocyanin alpha-B chain, found in Synechococcus sp. (strain ATCC 27144 / PCC 6301 / SAUG 1402/1) (Anacystis nidulans).